Here is a 291-residue protein sequence, read N- to C-terminus: MFKGSCVALITPFTEDGVNYEELRKLLEWHIKNHTDAILVCGTTGEGSTMTLEEKKEVIKFSVEVVNKRVPVIAGTGTNNTKASIELSKYAEEVGADMVLIITPYYNKTSQKGLYAHFSAINDAINIPIMLYNVPSRTGMNITPLMLDKLANLNNVVAIKEASGDLSQVAKMAELCGDRIAIYSGNDDQIVPILSLGGAGVVSVLANILPEETHNICEKYFLGEVIESRNLQLKYLSLANSLFIETNPIPVKTAMNLMNFNCGPLRLPLCEMEDSNLVILEENLKANGLIK.

Thr44 provides a ligand contact to pyruvate. Catalysis depends on Tyr132, which acts as the Proton donor/acceptor. Lys160 functions as the Schiff-base intermediate with substrate in the catalytic mechanism. A pyruvate-binding site is contributed by Val202.

The protein belongs to the DapA family. As to quaternary structure, homotetramer; dimer of dimers.

Its subcellular location is the cytoplasm. It catalyses the reaction L-aspartate 4-semialdehyde + pyruvate = (2S,4S)-4-hydroxy-2,3,4,5-tetrahydrodipicolinate + H2O + H(+). The protein operates within amino-acid biosynthesis; L-lysine biosynthesis via DAP pathway; (S)-tetrahydrodipicolinate from L-aspartate: step 3/4. Its function is as follows. Catalyzes the condensation of (S)-aspartate-beta-semialdehyde [(S)-ASA] and pyruvate to 4-hydroxy-tetrahydrodipicolinate (HTPA). This chain is 4-hydroxy-tetrahydrodipicolinate synthase, found in Clostridium perfringens (strain SM101 / Type A).